The sequence spans 1411 residues: Protein RhsB (1411 aa).

Repeat copies occupy residues 330–352 (GKQV…HRHT), 353–374 (GRPE…LNPA), 375–417 (GLSY…EHAD), 418–438 (GSVT…TDAA), 439–460 (GRTT…TTPD), 461–481 (GRAS…TGPD), 482–502 (GLEL…TAPD), 503–525 (GDIT…EDAT), 526–546 (GSRK…TDCS), 547–567 (GYVT…HREE), 568–588 (GLSQ…KDTQ), 589–609 (GHET…IAPD), 610–629 (GSRN…TTQG), 630–650 (GLTR…TSEN), 651–671 (GSHT…TGFD), 672–691 (GRTQ…SEDE), 692–711 (GLVT…RTVK), 712–734 (GETA…HISE), 735–758 (GHRV…QTVH), 808–828 (GDTP…LRSF), 829–850 (GRYE…HLNS), 851–871 (LLSD…ISSP), 872–894 (RQTR…TAAN), 895–930 (LDIR…NRIA), 931–959 (RDAH…VIRT), 960–984 (DDER…TQYE), 985–1019 (EPLV…MSLS), and 1162–1186 (GATA…HQLQ). Residues 330–1186 (GKQVRSFTYD…LNEENPHQLQ (857 aa)) are 28 X approximate tandem repeats.

It belongs to the RHS family.

In terms of biological role, rhs elements have a nonessential function. They may play an important role in the natural ecology of the cell. The protein is Protein RhsB (rhsB) of Escherichia coli (strain K12).